The sequence spans 667 residues: Cysteine-rich receptor-like protein kinase 11 (667 aa).

The signal sequence occupies residues Met-1–Ala-24. Gnk2-homologous domains lie at Gln-25–Phe-129 and Leu-135–Tyr-248. The Extracellular segment spans residues Gln-25 to Val-292. N-linked (GlcNAc...) asparagine glycosylation is found at Asn-37, Asn-54, Asn-64, Asn-106, Asn-126, Asn-150, and Asn-254. The span at Ser-259 to Val-268 shows a compositional bias: pro residues. The tract at residues Ser-259–Asp-282 is disordered. N-linked (GlcNAc...) asparagine glycosylation occurs at Asn-281. Residues Ala-293–Phe-313 form a helical membrane-spanning segment. Over Arg-314–Ser-667 the chain is Cytoplasmic. The region spanning Phe-350–Ile-629 is the Protein kinase domain. ATP contacts are provided by residues Leu-356–Val-364 and Lys-378. Phosphotyrosine is present on Tyr-423. Asp-475 serves as the catalytic Proton acceptor. A Phosphoserine modification is found at Ser-479. Thr-515 carries the post-translational modification Phosphothreonine. Tyr-523 carries the phosphotyrosine modification.

The protein belongs to the protein kinase superfamily. Ser/Thr protein kinase family. CRK subfamily. As to expression, detected in root, stem, leaf and flower.

The protein resides in the membrane. The enzyme catalyses L-seryl-[protein] + ATP = O-phospho-L-seryl-[protein] + ADP + H(+). The catalysed reaction is L-threonyl-[protein] + ATP = O-phospho-L-threonyl-[protein] + ADP + H(+). In Arabidopsis thaliana (Mouse-ear cress), this protein is Cysteine-rich receptor-like protein kinase 11 (CRK11).